Reading from the N-terminus, the 571-residue chain is Leiomodin-3 (571 aa).

3 disordered regions span residues Met-1–Pro-29, Pro-46–Asn-67, and Pro-91–Asp-228. Acidic residues predominate over residues Gln-10–Leu-23. Over residues Phe-94 to Arg-105 the composition is skewed to polar residues. A compositionally biased stretch (basic and acidic residues) spans Leu-119 to Ser-134. Acidic residues predominate over residues Glu-142–Glu-179. Over residues Gln-180–Ile-192 the composition is skewed to basic and acidic residues. The segment covering His-193 to Thr-204 has biased composition (polar residues). Residues Thr-206–Asp-228 are compositionally biased toward basic and acidic residues. Residues Val-397–Gly-436 adopt a coiled-coil conformation. A WH2 domain is found at Pro-545–Val-564.

The protein belongs to the tropomodulin family. In terms of assembly, may interact with tropomyosin alpha (TPM1/2) N-terminus. Interacts with KLHL40; leading to stabilization. In terms of processing, ubiquitinated, leading to its degradation. Interaction with KLHL40 negatively regulates ubiquitination and degradation. As to expression, skeletal muscle and heart-specific (at protein level).

The protein resides in the cytoplasm. The protein localises to the myofibril. It localises to the sarcomere. Its subcellular location is the a band. It is found in the m line. The protein resides in the cytoskeleton. Functionally, essential for the organization of sarcomeric actin thin filaments in skeletal muscle. Increases the rate of actin polymerization. The protein is Leiomodin-3 of Mus musculus (Mouse).